The primary structure comprises 428 residues: Homoserine dehydrogenase (428 aa).

NADPH contacts are provided by phenylalanine 10, threonine 12, valine 13, arginine 44, and lysine 106. Valine 13 lines the NAD(+) pocket. Residues valine 13, arginine 44, and lysine 106 each coordinate NADP(+). Positions 130, 133, 135, and 137 each coordinate Na(+). Residues glycine 188 and glutamate 191 each coordinate NADP(+). Glutamate 191 and aspartate 202 together coordinate L-homoserine. Catalysis depends on lysine 206, which acts as the Proton donor. Glycine 303 is an NADPH binding site. Glycine 303 contacts NAD(+). Glycine 303 lines the NADP(+) pocket. Residues 351–425 (YFSVETPDST…DFKLLNYFKV (75 aa)) enclose the ACT domain.

This sequence belongs to the homoserine dehydrogenase family. A metal cation is required as a cofactor.

It carries out the reaction L-homoserine + NADP(+) = L-aspartate 4-semialdehyde + NADPH + H(+). It catalyses the reaction L-homoserine + NAD(+) = L-aspartate 4-semialdehyde + NADH + H(+). Its pathway is amino-acid biosynthesis; L-methionine biosynthesis via de novo pathway; L-homoserine from L-aspartate: step 3/3. It functions in the pathway amino-acid biosynthesis; L-threonine biosynthesis; L-threonine from L-aspartate: step 3/5. Its function is as follows. Catalyzes the conversion of L-aspartate-beta-semialdehyde (L-Asa) to L-homoserine (L-Hse), the third step in the biosynthesis of threonine and methionine from aspartate. This is Homoserine dehydrogenase (hom) from Lactococcus lactis subsp. lactis (strain IL1403) (Streptococcus lactis).